The chain runs to 425 residues: MIFQNTLEFAQQLDNQDELKEYKNEFIFPQHEGKNVIYFTGNSLGLQPKSARNYVDEVMNDWANLAVEGHFYADKPWWDYQERFANPLSKIVGAKPLEVTVMNTLTVNLHLLMVSFYRPTKKRYKIICEEKAFPSDQYMFQSQVNFHGYKPEDAIVEIKRREGEHNIRLEDILSKIEAVGDELALVLFGGVNYYTGQVFDMKTITEAGHKQGAKVGFDLAHAAGNIKLELHDWNVDFAAWCSYKYMNSGPGNASGCFVHEKHHSDSNLPRFAGWWGHNKERRFKMEPTFDPVHGADGWQISNLPILSLAPYLASVEMFAEVGIEKLIRKRNQITAYLEFILHEIDKEVKGHFEILTPTNQEERACQLSVFLHGEGRSLFDYLMKNGVVTDWREPNVIRLAPVPLYCSFEDMYNFGQILKKGILEN.

Pyridoxal 5'-phosphate-binding positions include L105, T106, 133-136 (FPSD), D218, H221, and Y243. An N6-(pyridoxal phosphate)lysine modification is found at K244. Pyridoxal 5'-phosphate-binding residues include W274 and N302.

It belongs to the kynureninase family. Homodimer. It depends on pyridoxal 5'-phosphate as a cofactor.

The catalysed reaction is L-kynurenine + H2O = anthranilate + L-alanine + H(+). It carries out the reaction 3-hydroxy-L-kynurenine + H2O = 3-hydroxyanthranilate + L-alanine + H(+). It functions in the pathway amino-acid degradation; L-kynurenine degradation; L-alanine and anthranilate from L-kynurenine: step 1/1. It participates in cofactor biosynthesis; NAD(+) biosynthesis; quinolinate from L-kynurenine: step 2/3. Functionally, catalyzes the cleavage of L-kynurenine (L-Kyn) and L-3-hydroxykynurenine (L-3OHKyn) into anthranilic acid (AA) and 3-hydroxyanthranilic acid (3-OHAA), respectively. This chain is Kynureninase, found in Flavobacterium psychrophilum (strain ATCC 49511 / DSM 21280 / CIP 103535 / JIP02/86).